We begin with the raw amino-acid sequence, 354 residues long: Phosphatidylserine decarboxylase proenzyme (354 aa).

The helical transmembrane segment at Tyr18–Tyr36 threads the bilayer. Catalysis depends on charge relay system; for autoendoproteolytic cleavage activity residues Asp139, His198, and Ser308. Ser308 functions as the Schiff-base intermediate with substrate; via pyruvic acid; for decarboxylase activity in the catalytic mechanism. A Pyruvic acid (Ser); by autocatalysis modification is found at Ser308.

This sequence belongs to the phosphatidylserine decarboxylase family. PSD-B subfamily. Eukaryotic type I sub-subfamily. Heterodimer of a large membrane-associated beta subunit and a small pyruvoyl-containing alpha subunit. It depends on pyruvate as a cofactor. Post-translationally, is synthesized initially as an inactive proenzyme. Formation of the active enzyme involves a self-maturation process in which the active site pyruvoyl group is generated from an internal serine residue via an autocatalytic post-translational modification. Two non-identical subunits are generated from the proenzyme in this reaction, and the pyruvate is formed at the N-terminus of the alpha chain, which is derived from the carboxyl end of the proenzyme. The autoendoproteolytic cleavage occurs by a canonical serine protease mechanism, in which the side chain hydroxyl group of the serine supplies its oxygen atom to form the C-terminus of the beta chain, while the remainder of the serine residue undergoes an oxidative deamination to produce ammonia and the pyruvoyl prosthetic group on the alpha chain. During this reaction, the Ser that is part of the protease active site of the proenzyme becomes the pyruvoyl prosthetic group, which constitutes an essential element of the active site of the mature decarboxylase.

The protein localises to the membrane. The protein resides in the endoplasmic reticulum membrane. It catalyses the reaction a 1,2-diacyl-sn-glycero-3-phospho-L-serine + H(+) = a 1,2-diacyl-sn-glycero-3-phosphoethanolamine + CO2. Its pathway is phospholipid metabolism; phosphatidylethanolamine biosynthesis; phosphatidylethanolamine from CDP-diacylglycerol: step 2/2. Its activity is regulated as follows. Protease activity is inhibited by PMSF. Catalyzes the formation of phosphatidylethanolamine (PtdEtn) from phosphatidylserine (PtdSer). Plays a central role in phospholipid metabolism and in the interorganelle trafficking of phosphatidylserine. The protein is Phosphatidylserine decarboxylase proenzyme of Plasmodium knowlesi (strain H).